Consider the following 480-residue polypeptide: Glutamyl-tRNA(Gln) amidotransferase subunit A (480 aa).

Catalysis depends on charge relay system residues Lys-76 and Ser-151. The active-site Acyl-ester intermediate is Ser-175.

The protein belongs to the amidase family. GatA subfamily. Heterotrimer of A, B and C subunits.

It carries out the reaction L-glutamyl-tRNA(Gln) + L-glutamine + ATP + H2O = L-glutaminyl-tRNA(Gln) + L-glutamate + ADP + phosphate + H(+). Its function is as follows. Allows the formation of correctly charged Gln-tRNA(Gln) through the transamidation of misacylated Glu-tRNA(Gln) in organisms which lack glutaminyl-tRNA synthetase. The reaction takes place in the presence of glutamine and ATP through an activated gamma-phospho-Glu-tRNA(Gln). The protein is Glutamyl-tRNA(Gln) amidotransferase subunit A of Exiguobacterium sibiricum (strain DSM 17290 / CCUG 55495 / CIP 109462 / JCM 13490 / 255-15).